A 181-amino-acid chain; its full sequence is Oligoribonuclease (181 aa).

The Exonuclease domain occupies 8-171 (LIWIDLEMTG…DDIRESIAEL (164 aa)). Residue Tyr129 is part of the active site.

This sequence belongs to the oligoribonuclease family.

The protein resides in the cytoplasm. Functionally, 3'-to-5' exoribonuclease specific for small oligoribonucleotides. This Vibrio vulnificus (strain CMCP6) protein is Oligoribonuclease.